Consider the following 292-residue polypeptide: Expansin-like protein 6 (292 aa).

An N-terminal signal peptide occupies residues 1-24 (MIKIIYLIVLLVLLFKNNHIIIKA). At 25–267 (DDCPFPQIPI…QITSNSNNIL (243 aa)) the chain is on the extracellular side. In terms of domain architecture, Expansin-like EG45 spans 47–150 (HASCGFEKLT…IKVPCPTYGN (104 aa)). Disulfide bonds link Cys50–Cys80 and Cys83–Cys145. N-linked (GlcNAc...) asparagine glycosylation occurs at Asn92. The chain crosses the membrane as a helical span at residues 268-288 (PPSLYIIFLISILFLIINNIF). Over 289–292 (SNKY) the chain is Cytoplasmic.

It belongs to the expansin family. Expansin A subfamily.

It localises to the membrane. May serve to lubricate the movement of the cellulose microfibrils during cell growth and wall extension and/or may serve to maintain the fluid state of the slug cell wall. The chain is Expansin-like protein 6 (expl6) from Dictyostelium discoideum (Social amoeba).